The primary structure comprises 634 residues: Threonine--tRNA ligase (634 aa).

Residues 1-61 (MINITLPDGS…DHDASLRIIT (61 aa)) enclose the TGS domain. The catalytic stretch occupies residues 243 to 534 (DHRRIGKAQD…LIEHHAGAFP (292 aa)). Cys-334, His-385, and His-511 together coordinate Zn(2+).

The protein belongs to the class-II aminoacyl-tRNA synthetase family. In terms of assembly, homodimer. The cofactor is Zn(2+).

The protein resides in the cytoplasm. It carries out the reaction tRNA(Thr) + L-threonine + ATP = L-threonyl-tRNA(Thr) + AMP + diphosphate + H(+). In terms of biological role, catalyzes the attachment of threonine to tRNA(Thr) in a two-step reaction: L-threonine is first activated by ATP to form Thr-AMP and then transferred to the acceptor end of tRNA(Thr). Also edits incorrectly charged L-seryl-tRNA(Thr). The polypeptide is Threonine--tRNA ligase (Xanthomonas axonopodis pv. citri (strain 306)).